The sequence spans 273 residues: MTPIQALIEDAFERRADITPATVTPETKAAIDAVIADIDAGRLRVAEKIAGEWVTHQWLKKAVLLSFRIRDNAVLDDGVSRYFDKVDTKFADWDAARFQAAGFRAVPGAVVRKGSYIAKNTVLMPSFVNIGAFVDEGTMVDTWATVGSCAQIGKNVHLSGGVGIGGVLEPLQANPTIIEDNCFIGARSEIVEGVIVEEGSVISMGVYIGQSTRIFDRETGEVSYGRVPAGSVVVSGNLPSKDGSYSLYCAVIVKKVDAKTRGKVGINELLRGI.

Positions 104 and 141 each coordinate substrate.

The protein belongs to the transferase hexapeptide repeat family. In terms of assembly, homotrimer.

It localises to the cytoplasm. The catalysed reaction is (S)-2,3,4,5-tetrahydrodipicolinate + succinyl-CoA + H2O = (S)-2-succinylamino-6-oxoheptanedioate + CoA. It participates in amino-acid biosynthesis; L-lysine biosynthesis via DAP pathway; LL-2,6-diaminopimelate from (S)-tetrahydrodipicolinate (succinylase route): step 1/3. In Laribacter hongkongensis (strain HLHK9), this protein is 2,3,4,5-tetrahydropyridine-2,6-dicarboxylate N-succinyltransferase.